Consider the following 478-residue polypeptide: Methionine aminopeptidase 2-1 (478 aa).

Residues methionine 1–proline 124 form a disordered region. Residues asparagine 46–lysine 56 are compositionally biased toward acidic residues. The span at lysine 92–alanine 104 shows a compositional bias: basic residues. Residue histidine 230 coordinates substrate. Residues aspartate 251, aspartate 262, and histidine 331 each coordinate a divalent metal cation. Substrate is bound at residue histidine 339. Residues glutamate 364 and glutamate 459 each contribute to the a divalent metal cation site.

It belongs to the peptidase M24A family. Methionine aminopeptidase eukaryotic type 2 subfamily. Co(2+) is required as a cofactor. Requires Zn(2+) as cofactor. The cofactor is Mn(2+). Fe(2+) serves as cofactor.

The protein resides in the cytoplasm. The catalysed reaction is Release of N-terminal amino acids, preferentially methionine, from peptides and arylamides.. Cotranslationally removes the N-terminal methionine from nascent proteins. The N-terminal methionine is often cleaved when the second residue in the primary sequence is small and uncharged (Met-Ala-, Cys, Gly, Pro, Ser, Thr, or Val). This Aspergillus clavatus (strain ATCC 1007 / CBS 513.65 / DSM 816 / NCTC 3887 / NRRL 1 / QM 1276 / 107) protein is Methionine aminopeptidase 2-1.